Reading from the N-terminus, the 349-residue chain is Beta-glucanase (349 aa).

An N-terminal signal peptide occupies residues 1–27; sequence MNIKKTAVKSALAVAAAAAALTTNVSA. Residues 28–197 enclose the GH16 domain; the sequence is KDFSGAELYT…WVKVYKYTPG (170 aa). Catalysis depends on Glu79, which acts as the Nucleophile. Glu83 functions as the Proton donor in the catalytic mechanism. The segment at 258–311 is disordered; it reads SFNGQVPRDDEPAPQSSSSAPASSSSVPASSSSVPASSSSAFVPPSSSSATNAI. Residues 270–307 are compositionally biased toward low complexity; sequence APQSSSSAPASSSSVPASSSSVPASSSSAFVPPSSSSA. Repeat copies occupy residues 271 to 277, 278 to 284, 285 to 291, 292 to 298, and 301 to 307. Residues 271-307 are 5 X 7 AA tandem repeats of P-X-S-S-S-S-X; it reads PQSSSSAPASSSSVPASSSSVPASSSSAFVPPSSSSA.

Belongs to the glycosyl hydrolase 16 family.

The catalysed reaction is Hydrolysis of (1-&gt;4)-beta-D-glucosidic linkages in beta-D-glucans containing (1-&gt;3)- and (1-&gt;4)-bonds.. The protein is Beta-glucanase of Fibrobacter succinogenes (strain ATCC 19169 / S85).